The sequence spans 348 residues: Calcium/calmodulin-dependent protein kinase type 1 (348 aa).

The Nuclear localization signal 1 motif lies at Arg7–Tyr22. The region spanning Tyr22 to Ile278 is the Protein kinase domain. ATP-binding positions include Leu28–Val36 and Lys52. A Nuclear localization signal 2 motif is present at residues Lys71 to His78. Catalysis depends on Asp144, which acts as the Proton acceptor. Thr179 is modified (phosphothreonine; by ckk-1). The autoinhibitory domain stretch occupies residues Ile278–Leu318. The Nuclear export sequence motif lies at Ile288 to Val294. The short motif at Lys297 to Lys307 is the Nuclear localization signal 3 element. The tract at residues Lys298 to Gln319 is calmodulin-binding. Over residues Ser327–Gln338 the composition is skewed to polar residues. The tract at residues Ser327–Ala348 is disordered. Over residues Pro339–Ala348 the composition is skewed to pro residues.

It belongs to the protein kinase superfamily. CAMK Ser/Thr protein kinase family. CaMK subfamily. As to quaternary structure, interacts with importin ima-3; affinity for ima-3 is increased in the presence of Ca(2+) and calmodulin and leads to increased nuclear accumulation of cmk-1 in FLP neurons upon prolonged heat activation. It depends on Mg(2+) as a cofactor. Post-translationally, phosphorylation at Thr-179 can promote both nuclear export and import, sustaining nucleocytoplasmic shuttling. As to expression, expressed in head and tail neurons and vulval muscles. Throughout the nervous system. Detected in neurites and neuronal cell bodies. Expressed in the mechanosensory neurons, AVM and ALM, and in the interneurons, AVA, AVB and AVD. Expressed in the right and left ASE neurons where it functions cell-autonomously to control salt-avoidance learning. Expressed in FLP and AFD thermosensory neurons.

Its subcellular location is the nucleus. The protein resides in the cytoplasm. The enzyme catalyses L-seryl-[protein] + ATP = O-phospho-L-seryl-[protein] + ADP + H(+). It catalyses the reaction L-threonyl-[protein] + ATP = O-phospho-L-threonyl-[protein] + ADP + H(+). Its activity is regulated as follows. Activated by Ca(2+)/calmodulin. Binding of calmodulin results in a conformational change that generates functional binding sites for both substrate and ATP, and thus relieves autoinhibition and lowers the Km of substrate binding. Must be phosphorylated by ckk-1 to be maximally active but this does not appear to be required for activity in AFD neurons. In terms of biological role, calcium/calmodulin-dependent protein kinase that operates in the calcium-triggered CaMKK-CaMK1 signaling cascade which results in transcriptional activation. Transcriptional activation occurs at least in part through phosphorylation of crh-1. Regulates gene expression, sensory morphology, and function of the AFD thermosensory neurons. Involved in long-term adaptation of AFD neurons to temperatures warmer than the initial acclimatized cultivation temperature. Acts in the FLP thermal nociceptors to moderate the responsiveness to noxious heat and controls neuropeptide release from FLP neurons in response to temperature elevations. Regulates the dauer decision, the decision of the larvae to enter into the alternative stress-resistant and long-lived dauer developmental stage, based on the feeding state, primarily in the AWC sensory neurons. Acts non cell-autonomously in the AWC neurons to regulate expression of the daf-28 insulin-like peptide and cell-autonomously in the ASI sensory neurons to regulate expression of the growth promoting daf-7 in a food-regulated manner. Plays a role in memory-based thermal response of an individual AFD neuron cell. Influences habituation and sensitivity to repeated mechanosensory stimuli. Involved in chemotaxis response in AWC neurons to attractant 2-heptanone, a volatile organic compound emitted by the nematode pathogenic bacterium B.nematocida B16. Acts in the ASE salt-sensing neurons to promote a type of aversive gustatory-associated learning called salt-avoidance learning via regulation of crh-1 signaling and the promotion of long-term memory formation, but is not involved in salt attraction. Represses transcription of glutamate receptor glr-1 in the nucleus basally and in response to changes in synaptic activity. This chain is Calcium/calmodulin-dependent protein kinase type 1, found in Caenorhabditis elegans.